A 163-amino-acid chain; its full sequence is MASLSSSINSLFLKEFFGAFFLSMRYFFRQKATINYPFEKGPVSPRFRGEHALRRYPNGEERCIACKLCEAICPAQAITIEAGPRRNDGTRRTVRYDIDMVKCIYCGFCQEACPVDAIVEGPNFEFATETREELYFDKARLLDNGDRWEREIARNIAIDSPYR.

4Fe-4S ferredoxin-type domains lie at 53–83 (LRRY…IEAG) and 94–123 (VRYD…EGPN). [4Fe-4S] cluster-binding residues include Cys-63, Cys-66, Cys-69, Cys-73, Cys-103, Cys-106, Cys-109, and Cys-113.

It belongs to the complex I 23 kDa subunit family. NDH-1 is composed of 14 different subunits. Subunits NuoA, H, J, K, L, M, N constitute the membrane sector of the complex. Requires [4Fe-4S] cluster as cofactor.

The protein resides in the cell inner membrane. It catalyses the reaction a quinone + NADH + 5 H(+)(in) = a quinol + NAD(+) + 4 H(+)(out). Functionally, NDH-1 shuttles electrons from NADH, via FMN and iron-sulfur (Fe-S) centers, to quinones in the respiratory chain. The immediate electron acceptor for the enzyme in this species is believed to be ubiquinone. Couples the redox reaction to proton translocation (for every two electrons transferred, four hydrogen ions are translocated across the cytoplasmic membrane), and thus conserves the redox energy in a proton gradient. The chain is NADH-quinone oxidoreductase subunit I 1 from Rhizobium etli (strain ATCC 51251 / DSM 11541 / JCM 21823 / NBRC 15573 / CFN 42).